We begin with the raw amino-acid sequence, 305 residues long: Porphobilinogen deaminase (305 aa).

S-(dipyrrolylmethanemethyl)cysteine is present on cysteine 240.

This sequence belongs to the HMBS family. Monomer. The cofactor is dipyrromethane.

The enzyme catalyses 4 porphobilinogen + H2O = hydroxymethylbilane + 4 NH4(+). Its pathway is porphyrin-containing compound metabolism; protoporphyrin-IX biosynthesis; coproporphyrinogen-III from 5-aminolevulinate: step 2/4. Its function is as follows. Tetrapolymerization of the monopyrrole PBG into the hydroxymethylbilane pre-uroporphyrinogen in several discrete steps. This chain is Porphobilinogen deaminase (hemC), found in Xylella fastidiosa (strain 9a5c).